The chain runs to 627 residues: Chaperone protein HtpG (627 aa).

An a; substrate-binding region spans residues M1 to R339. A b region spans residues E340–K555. A c region spans residues L556–A627.

The protein belongs to the heat shock protein 90 family. Homodimer.

The protein localises to the cytoplasm. Its function is as follows. Molecular chaperone. Has ATPase activity. This chain is Chaperone protein HtpG, found in Pectobacterium atrosepticum (strain SCRI 1043 / ATCC BAA-672) (Erwinia carotovora subsp. atroseptica).